Here is a 500-residue protein sequence, read N- to C-terminus: Betaine aldehyde dehydrogenase, chloroplastic (500 aa).

Residues methionine 1–serine 7 constitute a chloroplast transit peptide. Glycine 238 to glycine 243 is a binding site for NAD(+). Residue glutamate 260 is the Proton acceptor of the active site. The Nucleophile role is filled by cysteine 294.

The protein belongs to the aldehyde dehydrogenase family. Homodimer.

The protein resides in the plastid. It localises to the chloroplast. The catalysed reaction is betaine aldehyde + NAD(+) + H2O = glycine betaine + NADH + 2 H(+). Its pathway is amine and polyamine biosynthesis; betaine biosynthesis via choline pathway; betaine from betaine aldehyde: step 1/1. The protein is Betaine aldehyde dehydrogenase, chloroplastic of Beta vulgaris (Sugar beet).